Reading from the N-terminus, the 666-residue chain is Zinc finger protein 710 (666 aa).

Glycyl lysine isopeptide (Lys-Gly) (interchain with G-Cter in SUMO2) cross-links involve residues Lys-110 and Lys-113. The interval 113 to 141 is disordered; it reads KAEEEEEQEVYEVSVPGDDKDPGPAEAPA. 3 consecutive C2H2-type zinc fingers follow at residues 297–319, 325–347, and 353–375; these read WQCR…ILGH, HSCP…LLTH, and HKCQ…MLLH. A Glycyl lysine isopeptide (Lys-Gly) (interchain with G-Cter in SUMO2) cross-link involves residue Lys-379. C2H2-type zinc fingers lie at residues 381–403, 409–431, 437–459, 465–487, 493–515, 521–543, 549–571, and 577–600; these read YSCH…EVKH, HVCV…LASH, YQCL…MLKH, FVCT…SLTH, FKCE…MLIH, YQCH…MIVH, FKCK…MHLH, and FKCP…KVKH.

It belongs to the krueppel C2H2-type zinc-finger protein family.

The protein resides in the nucleus. Its function is as follows. May be involved in transcriptional regulation. In Mus musculus (Mouse), this protein is Zinc finger protein 710 (Znf710).